The primary structure comprises 258 residues: Isoprenyl transferase (258 aa).

Residue D38 is part of the active site. D38 contacts Mg(2+). Residues 39 to 42, W43, R51, H55, and 83 to 85 each bind substrate; these read GNGR and STE. N86 serves as the catalytic Proton acceptor. Substrate is bound by residues W87, R89, R206, and 212–214; that span reads RIS. E225 lines the Mg(2+) pocket.

Belongs to the UPP synthase family. In terms of assembly, homodimer. The cofactor is Mg(2+).

Catalyzes the condensation of isopentenyl diphosphate (IPP) with allylic pyrophosphates generating different type of terpenoids. The sequence is that of Isoprenyl transferase from Bacillus cereus (strain ATCC 14579 / DSM 31 / CCUG 7414 / JCM 2152 / NBRC 15305 / NCIMB 9373 / NCTC 2599 / NRRL B-3711).